The chain runs to 208 residues: uncharacterized protein (208 aa).

A signal peptide spans Met1–Ala16. Disordered stretches follow at residues Met1–Gln95 and Arg145–Asp176. Positions Ala16 to Pro25 are enriched in low complexity. A compositionally biased stretch (basic and acidic residues) spans Arg32–Pro43. Residues His44–Arg54 are compositionally biased toward basic residues. Basic and acidic residues predominate over residues Gln55–Gln95. Polar residues-rich tracts occupy residues Lys148 to Pro158 and Gly167 to Asp176.

This is an uncharacterized protein from Mycobacterium tuberculosis (strain CDC 1551 / Oshkosh).